Here is a 162-residue protein sequence, read N- to C-terminus: NADH-ubiquinone oxidoreductase chain 6 (162 aa).

The next 5 helical transmembrane spans lie at 1 to 21 (MFFE…VGYT), 32 to 52 (VMLF…FLAL), 55 to 75 (LLVY…LLEI), 87 to 107 (WSTL…TPSM), and 129 to 149 (LYLY…VALF).

The protein belongs to the complex I subunit 6 family.

The protein resides in the mitochondrion membrane. It catalyses the reaction a ubiquinone + NADH + 5 H(+)(in) = a ubiquinol + NAD(+) + 4 H(+)(out). In terms of biological role, core subunit of the mitochondrial membrane respiratory chain NADH dehydrogenase (Complex I) that is believed to belong to the minimal assembly required for catalysis. Complex I functions in the transfer of electrons from NADH to the respiratory chain. The immediate electron acceptor for the enzyme is believed to be ubiquinone. This chain is NADH-ubiquinone oxidoreductase chain 6 (ND6), found in Chlamydomonas reinhardtii (Chlamydomonas smithii).